A 139-amino-acid chain; its full sequence is Holo-[acyl-carrier-protein] synthase (139 aa).

Residues D8 and E61 each coordinate Mg(2+).

The protein belongs to the P-Pant transferase superfamily. AcpS family. The cofactor is Mg(2+).

The protein localises to the cytoplasm. The enzyme catalyses apo-[ACP] + CoA = holo-[ACP] + adenosine 3',5'-bisphosphate + H(+). Transfers the 4'-phosphopantetheine moiety from coenzyme A to a Ser of acyl-carrier-protein. The sequence is that of Holo-[acyl-carrier-protein] synthase from Nitrobacter winogradskyi (strain ATCC 25391 / DSM 10237 / CIP 104748 / NCIMB 11846 / Nb-255).